A 563-amino-acid chain; its full sequence is Arginine--tRNA ligase (563 aa).

The 'HIGH' region motif lies at 121–131; it reads PNIAKPFSIGH.

Belongs to the class-I aminoacyl-tRNA synthetase family. As to quaternary structure, monomer.

It is found in the cytoplasm. It carries out the reaction tRNA(Arg) + L-arginine + ATP = L-arginyl-tRNA(Arg) + AMP + diphosphate. The chain is Arginine--tRNA ligase from Streptococcus pyogenes serotype M4 (strain MGAS10750).